A 470-amino-acid chain; its full sequence is ATP synthase subunit beta (470 aa).

An ATP-binding site is contributed by Gly-155–Thr-162.

The protein belongs to the ATPase alpha/beta chains family. In terms of assembly, F-type ATPases have 2 components, CF(1) - the catalytic core - and CF(0) - the membrane proton channel. CF(1) has five subunits: alpha(3), beta(3), gamma(1), delta(1), epsilon(1). CF(0) has three main subunits: a(1), b(2) and c(9-12). The alpha and beta chains form an alternating ring which encloses part of the gamma chain. CF(1) is attached to CF(0) by a central stalk formed by the gamma and epsilon chains, while a peripheral stalk is formed by the delta and b chains.

It is found in the cell membrane. It carries out the reaction ATP + H2O + 4 H(+)(in) = ADP + phosphate + 5 H(+)(out). In terms of biological role, produces ATP from ADP in the presence of a proton gradient across the membrane. The catalytic sites are hosted primarily by the beta subunits. This Lacticaseibacillus casei (Lactobacillus casei) protein is ATP synthase subunit beta.